The primary structure comprises 229 residues: tRNA (guanine-N(7)-)-methyltransferase (229 aa).

Glu62, Glu87, Asp114, and Asp137 together coordinate S-adenosyl-L-methionine. Residue Asp137 is part of the active site. Position 141 (Lys141) interacts with substrate. The tract at residues 143-148 (KHNKRR) is interaction with RNA. Substrate-binding positions include Asp173 and 208–211 (TKFE).

The protein belongs to the class I-like SAM-binding methyltransferase superfamily. TrmB family.

It carries out the reaction guanosine(46) in tRNA + S-adenosyl-L-methionine = N(7)-methylguanosine(46) in tRNA + S-adenosyl-L-homocysteine. It functions in the pathway tRNA modification; N(7)-methylguanine-tRNA biosynthesis. In terms of biological role, catalyzes the formation of N(7)-methylguanine at position 46 (m7G46) in tRNA. This is tRNA (guanine-N(7)-)-methyltransferase from Francisella tularensis subsp. novicida (strain U112).